The primary structure comprises 210 residues: 7-carboxy-7-deazaguanine synthase (210 aa).

Substrate-binding positions include 12–14 and Arg-27; that span reads LQG. One can recognise a Radical SAM core domain in the interval 18–210; that stretch reads HAGRASVFCR…VQTHKSLGIR (193 aa). [4Fe-4S] cluster contacts are provided by Cys-31, Cys-46, and Cys-49. Mg(2+) is bound at residue Thr-51. Thr-90 contacts substrate. S-adenosyl-L-methionine is bound by residues Gly-92, 133–135, and 173–176; these read SPK and QPMD.

This sequence belongs to the radical SAM superfamily. 7-carboxy-7-deazaguanine synthase family. As to quaternary structure, homodimer. [4Fe-4S] cluster serves as cofactor. S-adenosyl-L-methionine is required as a cofactor. The cofactor is Mg(2+).

It carries out the reaction 6-carboxy-5,6,7,8-tetrahydropterin + H(+) = 7-carboxy-7-deazaguanine + NH4(+). It functions in the pathway purine metabolism; 7-cyano-7-deazaguanine biosynthesis. Its function is as follows. Catalyzes the complex heterocyclic radical-mediated conversion of 6-carboxy-5,6,7,8-tetrahydropterin (CPH4) to 7-carboxy-7-deazaguanine (CDG), a step common to the biosynthetic pathways of all 7-deazapurine-containing compounds. This Bradyrhizobium diazoefficiens (strain JCM 10833 / BCRC 13528 / IAM 13628 / NBRC 14792 / USDA 110) protein is 7-carboxy-7-deazaguanine synthase.